Reading from the N-terminus, the 99-residue chain is DNA/RNA-binding protein Alba 1 (99 aa).

The residue at position 17 (K17) is an N6-acetyllysine.

This sequence belongs to the histone-like Alba family. Post-translationally, acetylated. Acetylation at Lys-17 decreases DNA-binding affinity.

Its subcellular location is the cytoplasm. It is found in the chromosome. Functionally, binds double-stranded DNA tightly but without sequence specificity. Involved in DNA compaction. In Sulfurisphaera tokodaii (strain DSM 16993 / JCM 10545 / NBRC 100140 / 7) (Sulfolobus tokodaii), this protein is DNA/RNA-binding protein Alba 1.